Reading from the N-terminus, the 286-residue chain is Light-independent protochlorophyllide reductase iron-sulfur ATP-binding protein (286 aa).

Residues 10 to 15 and K39 contribute to the ATP site; that span reads GIGKST. Residue S14 coordinates Mg(2+). C95 and C129 together coordinate [4Fe-4S] cluster. 180-181 lines the ATP pocket; it reads NR.

Belongs to the NifH/BchL/ChlL family. In terms of assembly, homodimer. Protochlorophyllide reductase is composed of three subunits; ChlL, ChlN and ChlB. [4Fe-4S] cluster serves as cofactor.

It carries out the reaction chlorophyllide a + oxidized 2[4Fe-4S]-[ferredoxin] + 2 ADP + 2 phosphate = protochlorophyllide a + reduced 2[4Fe-4S]-[ferredoxin] + 2 ATP + 2 H2O. It participates in porphyrin-containing compound metabolism; chlorophyll biosynthesis (light-independent). Its function is as follows. Component of the dark-operative protochlorophyllide reductase (DPOR) that uses Mg-ATP and reduced ferredoxin to reduce ring D of protochlorophyllide (Pchlide) to form chlorophyllide a (Chlide). This reaction is light-independent. The L component serves as a unique electron donor to the NB-component of the complex, and binds Mg-ATP. The protein is Light-independent protochlorophyllide reductase iron-sulfur ATP-binding protein of Leptolyngbya boryana (Plectonema boryanum).